A 232-amino-acid chain; its full sequence is Aspartate/glutamate leucyltransferase (232 aa).

Belongs to the R-transferase family. Bpt subfamily.

The protein resides in the cytoplasm. The catalysed reaction is N-terminal L-glutamyl-[protein] + L-leucyl-tRNA(Leu) = N-terminal L-leucyl-L-glutamyl-[protein] + tRNA(Leu) + H(+). It catalyses the reaction N-terminal L-aspartyl-[protein] + L-leucyl-tRNA(Leu) = N-terminal L-leucyl-L-aspartyl-[protein] + tRNA(Leu) + H(+). In terms of biological role, functions in the N-end rule pathway of protein degradation where it conjugates Leu from its aminoacyl-tRNA to the N-termini of proteins containing an N-terminal aspartate or glutamate. In Vibrio vulnificus (strain CMCP6), this protein is Aspartate/glutamate leucyltransferase.